Here is a 247-residue protein sequence, read N- to C-terminus: Cell division protein ZapD (247 aa).

The protein belongs to the ZapD family. As to quaternary structure, interacts with FtsZ.

It localises to the cytoplasm. In terms of biological role, cell division factor that enhances FtsZ-ring assembly. Directly interacts with FtsZ and promotes bundling of FtsZ protofilaments, with a reduction in FtsZ GTPase activity. This chain is Cell division protein ZapD, found in Salmonella choleraesuis (strain SC-B67).